Here is an 896-residue protein sequence, read N- to C-terminus: Translation initiation factor IF-2 (896 aa).

The segment covering 93-219 (VKRDPQEAER…RMAEENEKNW (127 aa)) has biased composition (basic and acidic residues). The segment at 93-307 (VKRDPQEAER…GSALQQGFQK (215 aa)) is disordered. Basic residues predominate over residues 256–271 (GRSRSSKAARPAKKGN). The segment covering 272–285 (KHAESKADREEARA) has biased composition (basic and acidic residues). Residues 395–564 (PRAPVVTIMG…LLQAEVLELK (170 aa)) form the tr-type G domain. The G1 stretch occupies residues 404 to 411 (GHVDHGKT). 404 to 411 (GHVDHGKT) contributes to the GTP binding site. The tract at residues 429-433 (GITQH) is G2. The segment at 450-453 (DTPG) is G3. GTP is bound by residues 450-454 (DTPGH) and 504-507 (NKID). Positions 504–507 (NKID) are G4. Residues 540–542 (SAK) form a G5 region.

Belongs to the TRAFAC class translation factor GTPase superfamily. Classic translation factor GTPase family. IF-2 subfamily.

It localises to the cytoplasm. Functionally, one of the essential components for the initiation of protein synthesis. Protects formylmethionyl-tRNA from spontaneous hydrolysis and promotes its binding to the 30S ribosomal subunits. Also involved in the hydrolysis of GTP during the formation of the 70S ribosomal complex. This is Translation initiation factor IF-2 from Klebsiella pneumoniae subsp. pneumoniae (strain ATCC 700721 / MGH 78578).